The chain runs to 538 residues: Anti-bacteriophage protein A (538 aa).

Interacts with AbpB.

Its function is as follows. Part of an antiviral system composed of AbpA and AbpB; when both are expressed from a plasmid they confer resistance to phages T2, T4, T7 and lambda but not RB32 or RB69. Resistance is temperature dependent, it can be seen at 30 degrees Celsius but not at 37 or 42 degrees Celsius. The system impairs phage but not bacterial DNA synthesis (shown for T4, T7 and lambda). Partially suppressed by mutations in T4 gene 41, a replicative helicase. This chain is Anti-bacteriophage protein A, found in Escherichia coli (strain K12).